The following is a 537-amino-acid chain: Chaperonin GroEL (537 aa).

Residues 29-32, 86-90, glycine 413, 477-479, and aspartate 493 contribute to the ATP site; these read TLGP, DGTTT, and NAA.

The protein belongs to the chaperonin (HSP60) family. As to quaternary structure, forms a cylinder of 14 subunits composed of two heptameric rings stacked back-to-back. Interacts with the co-chaperonin GroES.

The protein resides in the cytoplasm. It catalyses the reaction ATP + H2O + a folded polypeptide = ADP + phosphate + an unfolded polypeptide.. Functionally, together with its co-chaperonin GroES, plays an essential role in assisting protein folding. The GroEL-GroES system forms a nano-cage that allows encapsulation of the non-native substrate proteins and provides a physical environment optimized to promote and accelerate protein folding. The chain is Chaperonin GroEL from Parascardovia denticolens (Bifidobacterium denticolens).